Reading from the N-terminus, the 148-residue chain is uncharacterized protein (148 aa).

This is an uncharacterized protein from Methanothermobacter thermautotrophicus (Methanobacterium thermoformicicum).